Reading from the N-terminus, the 30-residue chain is GILLDKLKNFAKGVAQSLLNKASCALSGQC.

Cysteines 24 and 30 form a disulfide.

In terms of tissue distribution, expressed by the skin glands.

It is found in the secreted. Its function is as follows. Antimicrobial peptide. In Pelophylax ridibundus (Marsh frog), this protein is Brevinin-2Rg.